We begin with the raw amino-acid sequence, 275 residues long: Large ribosomal subunit protein uL2 (275 aa).

The segment at 223–275 is disordered; that stretch reads VAMNPIDHPHGGGEGRTGEAREPVSPWGTPSKGYKTRRNKRTNNMIVQRRKRK. Over residues 229-244 the composition is skewed to basic and acidic residues; that stretch reads DHPHGGGEGRTGEARE.

Belongs to the universal ribosomal protein uL2 family. Part of the 50S ribosomal subunit. Forms a bridge to the 30S subunit in the 70S ribosome.

In terms of biological role, one of the primary rRNA binding proteins. Required for association of the 30S and 50S subunits to form the 70S ribosome, for tRNA binding and peptide bond formation. It has been suggested to have peptidyltransferase activity; this is somewhat controversial. Makes several contacts with the 16S rRNA in the 70S ribosome. The protein is Large ribosomal subunit protein uL2 of Bordetella avium (strain 197N).